The sequence spans 209 residues: MSNVTVVSHPLVQHKLTKMRDKTTSTKTFRALMRETATLICYEVTRDLPMDEVQIETPVAPTKAYEIAGKKLVFAPILRTGLGMCEGMLDLVPSARVAHIGLYRDHETLEAVEYYFKAPEDIAGRLVIVVDPMLATGHSAIAAIARLKHYGVTNLRFVCLLAAQAGVDALREAHPDVPIWTAAIDQTLNDHGYIVPGLGDAGDRTFGTR.

Residues arginine 79, arginine 104, and 131 to 139 (DPMLATGHS) each bind 5-phospho-alpha-D-ribose 1-diphosphate. Residues isoleucine 194 and 199 to 201 (GDA) contribute to the uracil site. Aspartate 200 is a 5-phospho-alpha-D-ribose 1-diphosphate binding site.

This sequence belongs to the UPRTase family. Mg(2+) serves as cofactor.

It carries out the reaction UMP + diphosphate = 5-phospho-alpha-D-ribose 1-diphosphate + uracil. The protein operates within pyrimidine metabolism; UMP biosynthesis via salvage pathway; UMP from uracil: step 1/1. Its activity is regulated as follows. Allosterically activated by GTP. Catalyzes the conversion of uracil and 5-phospho-alpha-D-ribose 1-diphosphate (PRPP) to UMP and diphosphate. In Caulobacter vibrioides (strain ATCC 19089 / CIP 103742 / CB 15) (Caulobacter crescentus), this protein is Uracil phosphoribosyltransferase.